The sequence spans 142 residues: Protein KNATM (142 aa).

Residues 4-36 (KKDENSILENMKQEINHSLKEEAQEEEEILKKR) are a coiled coil.

In terms of assembly, interacts with KNAT1, KNAT3, KNAT4, BEL1, BLH2, BLH4 and BLH9, but not with BLH8 or the KNATM-A and KNATM-C isoforms. Isoforms KNATM-A and KNATM-C: no interactions with KNATM-B, KNOXX or BELL proteins. In terms of tissue distribution, detected in inflorescences, seedlings, leaves, hydathodes, stems, roots, embryo and siliques. Expressed in a polar pattern in organ primordia and at the boundary of mature organs. Detected in the lateral domains of flower meristems, but not in the inflorescence meristem or the vegetative shoot apical meristem.

It localises to the cytoplasm. Its subcellular location is the nucleus. In terms of biological role, transcriptional regulator involved in leaf proximal/distal patterning. May act by sequestering BELL transcription factors. This chain is Protein KNATM, found in Arabidopsis thaliana (Mouse-ear cress).